A 192-amino-acid polypeptide reads, in one-letter code: Protein GrpE (192 aa).

The disordered stretch occupies residues 1 to 34 (MSSKEQKTPNEQVSEEMENAAEQQVEATQETGEG). Positions 21 to 31 (AEQQVEATQET) are enriched in polar residues.

This sequence belongs to the GrpE family. As to quaternary structure, homodimer.

Its subcellular location is the cytoplasm. Participates actively in the response to hyperosmotic and heat shock by preventing the aggregation of stress-denatured proteins, in association with DnaK and GrpE. It is the nucleotide exchange factor for DnaK and may function as a thermosensor. Unfolded proteins bind initially to DnaJ; upon interaction with the DnaJ-bound protein, DnaK hydrolyzes its bound ATP, resulting in the formation of a stable complex. GrpE releases ADP from DnaK; ATP binding to DnaK triggers the release of the substrate protein, thus completing the reaction cycle. Several rounds of ATP-dependent interactions between DnaJ, DnaK and GrpE are required for fully efficient folding. The sequence is that of Protein GrpE from Yersinia enterocolitica serotype O:8 / biotype 1B (strain NCTC 13174 / 8081).